The following is a 384-amino-acid chain: Lipid-A-disaccharide synthase (384 aa).

It belongs to the LpxB family.

The catalysed reaction is a lipid X + a UDP-2-N,3-O-bis[(3R)-3-hydroxyacyl]-alpha-D-glucosamine = a lipid A disaccharide + UDP + H(+). It functions in the pathway bacterial outer membrane biogenesis; LPS lipid A biosynthesis. Functionally, condensation of UDP-2,3-diacylglucosamine and 2,3-diacylglucosamine-1-phosphate to form lipid A disaccharide, a precursor of lipid A, a phosphorylated glycolipid that anchors the lipopolysaccharide to the outer membrane of the cell. In Gloeothece citriformis (strain PCC 7424) (Cyanothece sp. (strain PCC 7424)), this protein is Lipid-A-disaccharide synthase.